The chain runs to 419 residues: DNA polymerase IV (419 aa).

Residues 12 to 193 (IFHIDMNCFY…MSVEEMYGIG (182 aa)) form the UmuC domain. Aspartate 16 and aspartate 112 together coordinate Mg(2+). Glutamate 113 is a catalytic residue. Residues 388-419 (IITSQKNKNESQENQQPRTSFQKDFLDDYKKP) form a disordered region.

Belongs to the DNA polymerase type-Y family. In terms of assembly, monomer. It depends on Mg(2+) as a cofactor.

It is found in the cytoplasm. It carries out the reaction DNA(n) + a 2'-deoxyribonucleoside 5'-triphosphate = DNA(n+1) + diphosphate. Its function is as follows. Poorly processive, error-prone DNA polymerase involved in untargeted mutagenesis. Copies undamaged DNA at stalled replication forks, which arise in vivo from mismatched or misaligned primer ends. These misaligned primers can be extended by PolIV. Exhibits no 3'-5' exonuclease (proofreading) activity. May be involved in translesional synthesis, in conjunction with the beta clamp from PolIII. The sequence is that of DNA polymerase IV from Oceanobacillus iheyensis (strain DSM 14371 / CIP 107618 / JCM 11309 / KCTC 3954 / HTE831).